The following is a 230-amino-acid chain: Orotidine 5'-phosphate decarboxylase (230 aa).

Substrate is bound by residues D10, K31, 58–67 (DLKLHDIPNT), T117, R179, Q188, G208, and R209. The active-site Proton donor is the K60.

It belongs to the OMP decarboxylase family. Type 1 subfamily. In terms of assembly, homodimer.

It catalyses the reaction orotidine 5'-phosphate + H(+) = UMP + CO2. It functions in the pathway pyrimidine metabolism; UMP biosynthesis via de novo pathway; UMP from orotate: step 2/2. Catalyzes the decarboxylation of orotidine 5'-monophosphate (OMP) to uridine 5'-monophosphate (UMP). In Staphylococcus aureus (strain USA300), this protein is Orotidine 5'-phosphate decarboxylase.